The chain runs to 125 residues: Holo-[acyl-carrier-protein] synthase (125 aa).

Mg(2+) is bound by residues aspartate 8 and glutamate 56.

This sequence belongs to the P-Pant transferase superfamily. AcpS family. Mg(2+) is required as a cofactor.

It is found in the cytoplasm. It carries out the reaction apo-[ACP] + CoA = holo-[ACP] + adenosine 3',5'-bisphosphate + H(+). Transfers the 4'-phosphopantetheine moiety from coenzyme A to a Ser of acyl-carrier-protein. The protein is Holo-[acyl-carrier-protein] synthase of Borrelia hermsii (strain HS1 / DAH).